The following is a 299-amino-acid chain: Ig alpha chain C region (299 aa).

2 Ig-like domains span residues 71–167 (PSLS…ATIS) and 174–276 (PQVH…KTID).

Ig alpha is the major immunoglobulin class in body secretions. It may serve both to defend against local infection and to prevent access of foreign antigens to the general immunologic system. The polypeptide is Ig alpha chain C region (Oryctolagus cuniculus (Rabbit)).